The following is a 254-amino-acid chain: 3-deoxy-manno-octulosonate cytidylyltransferase (254 aa).

The protein belongs to the KdsB family.

Its subcellular location is the cytoplasm. The catalysed reaction is 3-deoxy-alpha-D-manno-oct-2-ulosonate + CTP = CMP-3-deoxy-beta-D-manno-octulosonate + diphosphate. The protein operates within nucleotide-sugar biosynthesis; CMP-3-deoxy-D-manno-octulosonate biosynthesis; CMP-3-deoxy-D-manno-octulosonate from 3-deoxy-D-manno-octulosonate and CTP: step 1/1. Its pathway is bacterial outer membrane biogenesis; lipopolysaccharide biosynthesis. In terms of biological role, activates KDO (a required 8-carbon sugar) for incorporation into bacterial lipopolysaccharide in Gram-negative bacteria. This Chlamydia abortus (strain DSM 27085 / S26/3) (Chlamydophila abortus) protein is 3-deoxy-manno-octulosonate cytidylyltransferase.